A 1039-amino-acid chain; its full sequence is Multidrug resistance protein MdtB (1039 aa).

The next 11 helical transmembrane spans lie at 15–37, 345–362, 367–389, 396–418, 438–460, 472–494, 535–557, 866–888, 908–930, 967–989, and 999–1021; these read LFIM…GIIG, FELM…YLFL, ATII…MVFL, LTLM…VIEN, GEIG…PLLF, FAIT…TPMM, HPWL…WVFI, VWLI…ESFI, LMIA…IGIV, ILMT…GVGA, and MVGG…YLLF.

It belongs to the resistance-nodulation-cell division (RND) (TC 2.A.6) family. MdtB subfamily. As to quaternary structure, part of a tripartite efflux system composed of MdtA, MdtB and MdtC. MdtB forms a heteromultimer with MdtC.

The protein resides in the cell inner membrane. This is Multidrug resistance protein MdtB from Shigella flexneri.